The chain runs to 101 residues: NAD(P)H-quinone oxidoreductase subunit 4L, chloroplastic (101 aa).

The next 3 helical transmembrane spans lie at 2-22, 32-52, and 61-81; these read ILEHVLVLSAYLFLIGLYGLI, MCLELILNAVNMNFVTFSDFF, and IFCIFVIAIAAAEAAIGLAIV.

It belongs to the complex I subunit 4L family. In terms of assembly, NDH is composed of at least 16 different subunits, 5 of which are encoded in the nucleus.

It is found in the plastid. The protein resides in the chloroplast thylakoid membrane. The enzyme catalyses a plastoquinone + NADH + (n+1) H(+)(in) = a plastoquinol + NAD(+) + n H(+)(out). The catalysed reaction is a plastoquinone + NADPH + (n+1) H(+)(in) = a plastoquinol + NADP(+) + n H(+)(out). Its function is as follows. NDH shuttles electrons from NAD(P)H:plastoquinone, via FMN and iron-sulfur (Fe-S) centers, to quinones in the photosynthetic chain and possibly in a chloroplast respiratory chain. The immediate electron acceptor for the enzyme in this species is believed to be plastoquinone. Couples the redox reaction to proton translocation, and thus conserves the redox energy in a proton gradient. The sequence is that of NAD(P)H-quinone oxidoreductase subunit 4L, chloroplastic from Olimarabidopsis pumila (Dwarf rocket).